Here is a 148-residue protein sequence, read N- to C-terminus: Transcriptional regulator MraZ (148 aa).

SpoVT-AbrB domains are found at residues 5–51 (STQL…PQPV) and 80–123 (ASDV…DMAK).

This sequence belongs to the MraZ family. As to quaternary structure, forms oligomers.

The protein localises to the cytoplasm. The protein resides in the nucleoid. The polypeptide is Transcriptional regulator MraZ (Nitrosomonas europaea (strain ATCC 19718 / CIP 103999 / KCTC 2705 / NBRC 14298)).